The sequence spans 376 residues: Cytochrome b (376 aa).

4 helical membrane passes run 28 to 48, 72 to 94, 107 to 127, and 169 to 189; these read YGFL…FLAS, WCFR…LHIL, SWIS…VGYV, and FFVL…IHIF. Residues H78 and H92 each contribute to the heme b site. H173 and H187 together coordinate heme b. Position 192 (H192) interacts with a ubiquinone. The next 4 membrane-spanning stretches (helical) occupy residues 214–234, 274–294, 317–337, and 340–360; these read LLSL…IQSL, VPSK…LFLL, VPII…CQLP, and IFIL…LFVL.

The protein belongs to the cytochrome b family. As to quaternary structure, the main subunits of complex b-c1 are: cytochrome b, cytochrome c1 and the Rieske protein. Heme b is required as a cofactor.

Its subcellular location is the mitochondrion inner membrane. Functionally, component of the ubiquinol-cytochrome c reductase complex (complex III or cytochrome b-c1 complex) that is part of the mitochondrial respiratory chain. The b-c1 complex mediates electron transfer from ubiquinol to cytochrome c. Contributes to the generation of a proton gradient across the mitochondrial membrane that is then used for ATP synthesis. This Plasmodium falciparum protein is Cytochrome b (MT-CYB).